Consider the following 193-residue polypeptide: MISPRIMFTRRSAPYWATFLVIVLAALWLLWIGREPICTCGSVKLWHGETMSSESSQHIADWYTPSHVIHGLVFYAALWLVAPRLSFGWRLAIATLVESAWEIVENSDAIIERYRAVTISLDYYGDSVLNSVSDILAMVLGFVLAARLPVWASVAIVIGFEALTTWLIRDGLALNVLMLLWPLEAVRGWQAAL.

Transmembrane regions (helical) follow at residues 13-33 (APYW…LWIG), 62-82 (WYTP…WLVA), 148-168 (LPVW…TWLI), and 172-192 (LALN…WQAA).

The protein belongs to the UPF0314 family.

The protein localises to the cell membrane. The chain is UPF0314 protein Pden_1914 from Paracoccus denitrificans (strain Pd 1222).